A 408-amino-acid chain; its full sequence is Peptidase T (408 aa).

His78 lines the Zn(2+) pocket. The active site involves Asp80. A Zn(2+)-binding site is contributed by Asp140. Glu173 functions as the Proton acceptor in the catalytic mechanism. Glu174, Asp196, and His379 together coordinate Zn(2+).

It belongs to the peptidase M20B family. Zn(2+) serves as cofactor.

The protein localises to the cytoplasm. The catalysed reaction is Release of the N-terminal residue from a tripeptide.. In terms of biological role, cleaves the N-terminal amino acid of tripeptides. The chain is Peptidase T from Citrobacter koseri (strain ATCC BAA-895 / CDC 4225-83 / SGSC4696).